Here is an 860-residue protein sequence, read N- to C-terminus: MQEQYRPEEIESKVQLHWDEKRTFEVTEDESKEKYYCLSMLPYPSGRLHMGHVRNYTIGDVIARYQRMLGKNVLQPIGWDAFGLPAEGAAVKNNTAPAPWTYDNIAYMKNQLKMLGFGYDWSRELATCTPEYYRWEQKFFTELYKKGLVYKKTSAVNWCPNDQTVLANEQVIDGCCWRCDTKVERKEIPQWFIKITAYADELLNDLDKLDHWPDTVKTMQRNWIGRSEGVEITFNVNDYDNTLTVYTTRPDTFMGCTYLAVAAGHPLAQKAAENNPELAAFIDECRNTKVAEAEMATMEKKGVDTGFKAVHPLTGEEIPVWAANFVLMEYGTGAVMAVPGHDQRDYEFASKYGLNIKPVILAADGSEPDLSQQALTEKGVLFNSGEFNGLDHEAAFNAIADKLTAMGVGERKVNYRLRDWGVSRQRYWGAPIPMVTLEDGTVMPTPDDQLPVILPEDVVMDGITSPIKADPEWAKTTVNGMPALRETDTFDTFMESSWYYARYTCPEYKEGMLDSKAANYWLPVDIYIGGIEHAIMHLLYFRFFHKLMRDAGMVNSDEPAKQLLCQGMVLADAFYYVGENGERNWVSPVDAIVERDEKGRIVKAKDAAGHELVYTGMSKMSKSKNNGIDPQVMVERYGADTVRLFMMFASPADMTLEWQESGVEGANRFLKRVWKLVYEHTAKGDVAALNVDALTEDQKALRRDVHKTIAKVTDDIGRRQTFNTAIAAIMELMNKLAKAPTDGEQDRALMQEALLAVVRMLNPFTPHICFTLWQELKGEGDIDNAPWPVADEKAMVEDSTLVVVQVNGKVRAKITVPVDATEEQVRERAGQEHLVAKYLDGVTVRKVIYVPGKLLNLVVG.

The short motif at 42–52 (PYPSGRLHMGH) is the 'HIGH' region element. Residues 619–623 (KMSKS) carry the 'KMSKS' region motif. Lys622 serves as a coordination point for ATP.

It belongs to the class-I aminoacyl-tRNA synthetase family.

Its subcellular location is the cytoplasm. The catalysed reaction is tRNA(Leu) + L-leucine + ATP = L-leucyl-tRNA(Leu) + AMP + diphosphate. This is Leucine--tRNA ligase from Escherichia coli O81 (strain ED1a).